A 130-amino-acid polypeptide reads, in one-letter code: MARPTKKSGPRKQKRNVPSGVAHIQSTFNNTIVSIADPAGEVISWASAGSSGFKGAKKGTPFAAQTAAEAAARRAIDQGMRQLEVMVSGPGSGRETAIRALQSAGLEITLIRDVTPIPHNGCRPPKRRRV.

Residues 1–15 (MARPTKKSGPRKQKR) show a composition bias toward basic residues. The disordered stretch occupies residues 1 to 21 (MARPTKKSGPRKQKRNVPSGV).

The protein belongs to the universal ribosomal protein uS11 family. Part of the 30S ribosomal subunit. Interacts with proteins S7 and S18. Binds to IF-3.

Functionally, located on the platform of the 30S subunit, it bridges several disparate RNA helices of the 16S rRNA. Forms part of the Shine-Dalgarno cleft in the 70S ribosome. This chain is Small ribosomal subunit protein uS11, found in Synechococcus elongatus (strain ATCC 33912 / PCC 7942 / FACHB-805) (Anacystis nidulans R2).